Consider the following 519-residue polypeptide: Sorting nexin-2 (519 aa).

The tract at residues 1–104 (MAAEREPPPL…EPSPAVTPVT (104 aa)) is disordered. 2 stretches are compositionally biased toward low complexity: residues 27 to 50 (LFTSTVSTLESSPSSPEPASLPAE) and 93 to 104 (SSEPSPAVTPVT). Ser97 bears the Phosphoserine mark. 2 positions are modified to phosphothreonine: Thr101 and Thr104. Phosphoserine occurs at positions 117 and 119. Residues 140 to 269 (FDIEIGVSDP…QFLESSELPR (130 aa)) form the PX domain. A 1,2-diacyl-sn-glycero-3-phospho-(1D-myo-inositol-3-phosphate)-binding residues include Arg183, Ser185, Lys211, and Arg235. Position 185 is a phosphoserine (Ser185). The interval 260 to 519 (QFLESSELPR…AFLPEAKAIA (260 aa)) is interaction with RhoG. A Phosphoserine modification is found at Ser277. The membrane-binding amphipathic helix stretch occupies residues 278-295 (GAGILRMVNKAADAVNKM). In terms of domain architecture, BAR spans 299–519 (MNESDAWFEE…AFLPEAKAIA (221 aa)). Residue Lys469 is modified to N6-acetyllysine.

It belongs to the sorting nexin family. In terms of assembly, predominantly forms heterodimers with BAR domain-containing sorting nexins SNX5, SNX6 and SNX32; can self-associate to form homodimers. The heterodimers are proposed to self-assemble into helical arrays on the membrane to stabilize and expand local membrane curvature underlying endosomal tubule formation. Thought to be a component of the originally described retromer complex (also called SNX-BAR retromer) which is a pentamer containing the heterotrimeric retromer cargo-selective complex (CSC), also described as vacuolar protein sorting subcomplex (VPS), and a heterodimeric membrane-deforming subcomplex formed between SNX1 or SNX2 and SNX5 or SNX6 (also called SNX-BAR subcomplex); the respective CSC and SNX-BAR subcomplexes associate with low affinity. Interacts with SNX5, SNX6, SNX32, VPS26A, VPS29, VPS35, FNBP1, KALRN, RHOG (GDP-bound form).

The protein resides in the early endosome membrane. It is found in the cell projection. Its subcellular location is the lamellipodium. Its function is as follows. Involved in several stages of intracellular trafficking. Interacts with membranes containing phosphatidylinositol 3-phosphate (PtdIns(3P)) or phosphatidylinositol 3,5-bisphosphate (PtdIns(3,5)P2). Acts in part as component of the retromer membrane-deforming SNX-BAR subcomplex. The SNX-BAR retromer mediates retrograde transport of cargo proteins from endosomes to the trans-Golgi network (TGN) and is involved in endosome-to-plasma membrane transport for cargo protein recycling. The SNX-BAR subcomplex functions to deform the donor membrane into a tubular profile called endosome-to-TGN transport carrier (ETC). Can sense membrane curvature and has in vitro vesicle-to-membrane remodeling activity. Required for retrograde endosome-to-TGN transport of TGN38. Promotes KALRN- and RHOG-dependent but retromer-independent membrane remodeling such as lamellipodium formation; the function is dependent on GEF activity of KALRN. This chain is Sorting nexin-2 (SNX2), found in Homo sapiens (Human).